The sequence spans 406 residues: 2,3-bisphosphoglycerate-independent phosphoglycerate mutase (406 aa).

The protein belongs to the BPG-independent phosphoglycerate mutase family. A-PGAM subfamily.

The enzyme catalyses (2R)-2-phosphoglycerate = (2R)-3-phosphoglycerate. Its pathway is carbohydrate degradation; glycolysis; pyruvate from D-glyceraldehyde 3-phosphate: step 3/5. Its function is as follows. Catalyzes the interconversion of 2-phosphoglycerate and 3-phosphoglycerate. This is 2,3-bisphosphoglycerate-independent phosphoglycerate mutase from Methanococcus maripaludis (strain C7 / ATCC BAA-1331).